The primary structure comprises 191 residues: Prophage tail fiber assembly protein homolog TfaR (191 aa).

The protein belongs to the tfa family.

The sequence is that of Prophage tail fiber assembly protein homolog TfaR (tfaR) from Escherichia coli (strain K12).